The chain runs to 565 residues: Coiled-coil domain-containing protein 17 (565 aa).

The tract at residues 58 to 87 is disordered; that stretch reads IMAQEKSRDQEASTSALKRLTEETAGSPGE. 2 coiled-coil regions span residues 97-160 and 219-271; these read ARRM…TLGA and LQLQ…KVLS.

The protein is Coiled-coil domain-containing protein 17 (Ccdc17) of Mus musculus (Mouse).